The primary structure comprises 1053 residues: Probable dihydropyrimidine dehydrogenase [NADP(+)] (1053 aa).

The region spanning 84–115 is the 4Fe-4S ferredoxin-type 1 domain; it reads ERGALKEAMRCLKCADAPCQKSCPTQLDIKSF. [4Fe-4S] cluster contacts are provided by Cys94, Cys97, Cys102, Cys106, Cys145, Cys151, Cys155, and Gln171. Residues 207–211, 231–239, Arg248, and Leu274 each bind FAD; these read GCGPA and EKRAYIGGL. Residues 354–357, 378–379, Arg385, 451–453, and 495–501 each bind NADP(+); these read AGDT, RK, AFG, and DVAGVAE. FAD is bound at residue 494–503; the sequence is GDVAGVAETT. FMN is bound by residues Ser574 and 598 to 599; that span reads KT. Residues Asn633 and 692–694 contribute to the substrate site; that span reads NLS. Cys695 acts as the Proton acceptor in catalysis. Lys733 is a binding site for FMN. Residue 760 to 761 coordinates substrate; the sequence is NT. FMN contacts are provided by residues Gly791, 817-819, and 840-841; these read TGG and CS. 4Fe-4S ferredoxin-type domains follow at residues 949–981 and 983–1013; these read EVAIIDHDMCINCGKCYMTCNDSGYQAITFDAV and HQPHVTEDDCTGCTLCYSVCPIPECIQMVPR. 8 residues coordinate [4Fe-4S] cluster: Cys958, Cys961, Cys964, Cys968, Cys992, Cys995, Cys998, and Cys1002.

This sequence belongs to the dihydropyrimidine dehydrogenase family. It depends on [4Fe-4S] cluster as a cofactor. FAD serves as cofactor. The cofactor is FMN.

It carries out the reaction 5,6-dihydrouracil + NADP(+) = uracil + NADPH + H(+). Its pathway is amino-acid biosynthesis; beta-alanine biosynthesis. Involved in pyrimidine base degradation. Catalyzes the reduction of uracil and thymine. Also involved the degradation of the chemotherapeutic drug 5-fluorouracil. The protein is Probable dihydropyrimidine dehydrogenase [NADP(+)] of Caenorhabditis briggsae.